Consider the following 354-residue polypeptide: Carbamoyl phosphate synthase small chain (354 aa).

The segment at 1–167 (MEAVLILEDG…KEPKIHKTAN (167 aa)) is CPSase. L-glutamine is bound by residues Ser45, Gly219, and Gly221. The 184-residue stretch at 171–354 (RCVLIDCGVK…DEMIKLKDRK (184 aa)) folds into the Glutamine amidotransferase type-1 domain. Cys246 (nucleophile) is an active-site residue. The L-glutamine site is built by Leu247, Gln250, Asn288, Gly290, and Phe291. Catalysis depends on residues His330 and Glu332.

Belongs to the CarA family. As to quaternary structure, composed of two chains; the small (or glutamine) chain promotes the hydrolysis of glutamine to ammonia, which is used by the large (or ammonia) chain to synthesize carbamoyl phosphate. Tetramer of heterodimers (alpha,beta)4.

The enzyme catalyses hydrogencarbonate + L-glutamine + 2 ATP + H2O = carbamoyl phosphate + L-glutamate + 2 ADP + phosphate + 2 H(+). It carries out the reaction L-glutamine + H2O = L-glutamate + NH4(+). Its pathway is amino-acid biosynthesis; L-arginine biosynthesis; carbamoyl phosphate from bicarbonate: step 1/1. The protein operates within pyrimidine metabolism; UMP biosynthesis via de novo pathway; (S)-dihydroorotate from bicarbonate: step 1/3. Small subunit of the glutamine-dependent carbamoyl phosphate synthetase (CPSase). CPSase catalyzes the formation of carbamoyl phosphate from the ammonia moiety of glutamine, carbonate, and phosphate donated by ATP, constituting the first step of 2 biosynthetic pathways, one leading to arginine and/or urea and the other to pyrimidine nucleotides. The small subunit (glutamine amidotransferase) binds and cleaves glutamine to supply the large subunit with the substrate ammonia. The polypeptide is Carbamoyl phosphate synthase small chain (Methanocaldococcus jannaschii (strain ATCC 43067 / DSM 2661 / JAL-1 / JCM 10045 / NBRC 100440) (Methanococcus jannaschii)).